The primary structure comprises 129 residues: uncharacterized protein (129 aa).

The segment at 1 to 129 (MGRMASPLRS…PARQSARMAR (129 aa)) is disordered. A compositionally biased stretch (basic and acidic residues) spans 18 to 46 (ESTRHKETSTVRVETSSHREETSSHRVET). A compositionally biased stretch (low complexity) spans 47–59 (SSRQVRTSSRQVE). Residues 70–97 (LTPSTKRLPQFLEVSSQHVETSSQCTET) are compositionally biased toward polar residues.

This is an uncharacterized protein from Mus musculus (Mouse).